The sequence spans 594 residues: APOBEC1 complementation factor (594 aa).

RRM domains lie at 56–134 (CEIF…ASVD), 136–218 (CRLF…WAEP), and 231–303 (KILY…LAKP). The segment at 359–408 (HFPATKGHLSNRALIRTPSVREIYMNVPVGAAGVRGLGGRGYLAYTGLGR) is required for nuclear localization. Thr498 carries the phosphothreonine modification.

In terms of assembly, part of the apolipoprotein B mRNA editing complex with APOBEC1. Interacts with TNPO2; TNPO2 may be responsible for transport of A1CF into the nucleus. Interacts with SYNCRIP. Interacts with CELF2/CUGBP2. Interacts with RBM47. As to expression, isoforms 1 and 2 are widely expressed while isoforms 3 and 4 are restricted to liver and small intestine.

The protein localises to the nucleus. It localises to the endoplasmic reticulum. The protein resides in the cytoplasm. Functionally, essential component of the apolipoprotein B mRNA editing enzyme complex which is responsible for the postranscriptional editing of a CAA codon for Gln to a UAA codon for stop in APOB mRNA. Binds to APOB mRNA and is probably responsible for docking the catalytic subunit, APOBEC1, to the mRNA to allow it to deaminate its target cytosine. The complex also seems to protect the edited APOB mRNA from nonsense-mediated decay. In Rattus norvegicus (Rat), this protein is APOBEC1 complementation factor (A1cf).